Consider the following 473-residue polypeptide: Fumarate hydratase class II 2 (473 aa).

Residues 1 to 28 (MAKSARTKTARPATRTETDSFGPIEVPS) form a disordered region. Substrate contacts are provided by residues 108–110 (SGT), 139–142 (HPND), 149–151 (SSN), and threonine 197. Histidine 198 acts as the Proton donor/acceptor in catalysis. The active site involves serine 328. Substrate is bound by residues serine 329 and 334–336 (KVN).

It belongs to the class-II fumarase/aspartase family. Fumarase subfamily. Homotetramer.

The protein localises to the cytoplasm. It catalyses the reaction (S)-malate = fumarate + H2O. The protein operates within carbohydrate metabolism; tricarboxylic acid cycle; (S)-malate from fumarate: step 1/1. Its function is as follows. Involved in the TCA cycle. Catalyzes the stereospecific interconversion of fumarate to L-malate. In Bradyrhizobium diazoefficiens (strain JCM 10833 / BCRC 13528 / IAM 13628 / NBRC 14792 / USDA 110), this protein is Fumarate hydratase class II 2.